A 179-amino-acid polypeptide reads, in one-letter code: Large ribosomal subunit protein uL5 (179 aa).

It belongs to the universal ribosomal protein uL5 family. Part of the 50S ribosomal subunit; part of the 5S rRNA/L5/L18/L25 subcomplex. Contacts the 5S rRNA and the P site tRNA. Forms a bridge to the 30S subunit in the 70S ribosome.

In terms of biological role, this is one of the proteins that bind and probably mediate the attachment of the 5S RNA into the large ribosomal subunit, where it forms part of the central protuberance. In the 70S ribosome it contacts protein S13 of the 30S subunit (bridge B1b), connecting the 2 subunits; this bridge is implicated in subunit movement. Contacts the P site tRNA; the 5S rRNA and some of its associated proteins might help stabilize positioning of ribosome-bound tRNAs. The polypeptide is Large ribosomal subunit protein uL5 (Staphylococcus haemolyticus (strain JCSC1435)).